The sequence spans 332 residues: Malate dehydrogenase, cytoplasmic (332 aa).

NAD(+) contacts are provided by residues 16 to 17, Asp-43, and Gly-90; that span reads QI. Arg-99 lines the oxaloacetate pocket. NAD(+) is bound by residues Gln-113 and Asn-132. The oxaloacetate site is built by Asn-132, Arg-163, His-188, and Ser-243. Catalysis depends on His-188, which acts as the Proton acceptor.

Belongs to the LDH/MDH superfamily. MDH type 2 family. As to quaternary structure, monomer. In terms of tissue distribution, expressed constitutively in roots.

It is found in the cell membrane. The enzyme catalyses (S)-malate + NAD(+) = oxaloacetate + NADH + H(+). Malate dehydrogenase; catalyzes a reversible NAD-dependent dehydrogenase reaction involved in central metabolism and redox homeostasis. This is Malate dehydrogenase, cytoplasmic from Zea mays (Maize).